We begin with the raw amino-acid sequence, 160 residues long: Protein-export protein SecB (160 aa).

This sequence belongs to the SecB family. As to quaternary structure, homotetramer, a dimer of dimers. One homotetramer interacts with 1 SecA dimer.

The protein localises to the cytoplasm. Functionally, one of the proteins required for the normal export of preproteins out of the cell cytoplasm. It is a molecular chaperone that binds to a subset of precursor proteins, maintaining them in a translocation-competent state. It also specifically binds to its receptor SecA. This Aliivibrio salmonicida (strain LFI1238) (Vibrio salmonicida (strain LFI1238)) protein is Protein-export protein SecB.